The following is a 64-amino-acid chain: Beta-defensin 1 (64 aa).

Residues 1-20 (MRLHRLLLVFLLMVLLPVPG) form the signal peptide. The propeptide occupies 21–23 (LLK). Disulfide bonds link Cys-31/Cys-60, Cys-38/Cys-53, and Cys-43/Cys-61.

The protein belongs to the beta-defensin family. In terms of assembly, monomer. Homodimer.

The protein resides in the secreted. Its subcellular location is the membrane. Has bactericidal activity. May act as a ligand for C-C chemokine receptor CCR6. Positively regulates the sperm motility and bactericidal activity in a CCR6-dependent manner. Binds to CCR6 and triggers Ca2+ mobilization in the sperm which is important for its motility. In Sus scrofa (Pig), this protein is Beta-defensin 1 (DEFB1).